We begin with the raw amino-acid sequence, 116 residues long: Putative membrane protein (116 aa).

The helical transmembrane segment at 13-33 threads the bilayer; the sequence is VISIITFILVIAIFVIEIVSC.

Its subcellular location is the host membrane. The protein is Putative membrane protein of Alethinophid 1 reptarenavirus (isolate AlRrV1/Boa/USA/BC/2009) (Golden Gate virus).